An 81-amino-acid polypeptide reads, in one-letter code: MDSYSAKIRANLVCRRSTDPSIRVTFSSRSLGSLPAFAMFRSSRPSFIKICFPFSSSIVLASGYSVRASMRSSFERQNRSE.

As to expression, expressed in brain, notably in regions involved in long-term potentiation and long-term depression, such as hippocampal CA1 and CA3, dentate gyrus and cerebellar Purkinje layer.

The protein is Putative CNGA1-overlapping antisense gene protein of Homo sapiens (Human).